The chain runs to 95 residues: Defensin (95 aa).

Residues 1 to 17 (MKNYVFALLVVTAVAIA) form the signal peptide. The propeptide occupies 18–55 (LPNEDKNAPMRVHLLPQKEDESLKLEVTPVKEHHRTRR). 3 disulfides stabilise this stretch: Cys58–Cys85, Cys71–Cys91, and Cys75–Cys93.

This sequence belongs to the invertebrate defensin family. Type 1 subfamily.

The protein localises to the secreted. Functionally, antibacterial peptide mostly active against Gram-positive bacteria. This is Defensin from Formica aquilonia (Red wood ant).